Here is a 177-residue protein sequence, read N- to C-terminus: O-acetyl-ADP-ribose deacetylase (177 aa).

The region spanning 1 to 175 (MKSRIHVQHG…LYERLLTQQG (175 aa)) is the Macro domain. Substrate contacts are provided by residues 11 to 12 (DI), asparagine 25, 33 to 35 (GVD), and 122 to 126 (STGAY). Residue aspartate 35 is the Proton acceptor of the active site.

Belongs to the MacroD-type family. YmdB subfamily. Homodimer. Interacts with RNase III.

The catalysed reaction is 3''-O-acetyl-ADP-D-ribose + H2O = ADP-D-ribose + acetate + H(+). It catalyses the reaction 2''-O-acetyl-ADP-D-ribose + H2O = ADP-D-ribose + acetate + H(+). Its function is as follows. Deacetylates O-acetyl-ADP ribose to yield ADP-ribose and free acetate. Down-regulates ribonuclease 3 (RNase III) activity. Acts by interacting directly with the region of the ribonuclease that is required for dimerization/activation. The sequence is that of O-acetyl-ADP-ribose deacetylase from Citrobacter koseri (strain ATCC BAA-895 / CDC 4225-83 / SGSC4696).